Here is a 102-residue protein sequence, read N- to C-terminus: NADH-quinone oxidoreductase subunit K (102 aa).

A run of 3 helical transmembrane segments spans residues 5 to 25, 31 to 51, and 66 to 86; these read LEHYLAVAAILFVTGIFGIFV, IVILMSIELMLLAVNINMVAF, and FVLTVAAAEAAIGLAILVVFF.

It belongs to the complex I subunit 4L family. As to quaternary structure, NDH-1 is composed of 14 different subunits. Subunits NuoA, H, J, K, L, M, N constitute the membrane sector of the complex.

It localises to the cellular chromatophore membrane. The enzyme catalyses a quinone + NADH + 5 H(+)(in) = a quinol + NAD(+) + 4 H(+)(out). Its function is as follows. NDH-1 shuttles electrons from NADH, via FMN and iron-sulfur (Fe-S) centers, to quinones in the respiratory chain. The immediate electron acceptor for the enzyme in this species is believed to be ubiquinone. Couples the redox reaction to proton translocation (for every two electrons transferred, four hydrogen ions are translocated across the cytoplasmic membrane), and thus conserves the redox energy in a proton gradient. The chain is NADH-quinone oxidoreductase subunit K from Rhodobacter capsulatus (Rhodopseudomonas capsulata).